A 752-amino-acid chain; its full sequence is Phosphatidylinositol 4-phosphate 5-kinase 1 (752 aa).

MORN repeat units lie at residues Y81–M103, Y104–T126, Y127–T149, Y150–F172, Y173–Q195, Y196–R218, and Y219–S241. The 400-residue stretch at S349–F748 folds into the PIPK domain. Residues Y708–S729 form an activation loop region.

In terms of processing, phosphorylation inactivates the enzyme. As to expression, expressed in the whole plant, preferentially in roots. Strongly expressed in meristematic tissues, namely procambial cell layers.

The enzyme catalyses a 1,2-diacyl-sn-glycero-3-phospho-(1D-myo-inositol 4-phosphate) + ATP = a 1,2-diacyl-sn-glycero-3-phospho-(1D-myo-inositol-4,5-bisphosphate) + ADP + H(+). Its function is as follows. Catalyzes the synthesis of phosphatidylinositol 4,5-bisphosphate and phosphatidylinositol 3,4-bisphosphate. The polypeptide is Phosphatidylinositol 4-phosphate 5-kinase 1 (PIP5K1) (Arabidopsis thaliana (Mouse-ear cress)).